Here is a 479-residue protein sequence, read N- to C-terminus: Carbohydrate sulfotransferase 3 (479 aa).

Topologically, residues 1–20 (MEKGLTLPQDCRDFVHSLKM) are cytoplasmic. The helical; Signal-anchor for type II membrane protein transmembrane segment at 21–38 (RSKYALFLVFVVIVFVFI) threads the bilayer. Over 39 to 479 (EKENKIISRV…LEERGTFWVT (441 aa)) the chain is Lumenal. 3 N-linked (GlcNAc...) asparagine glycosylation sites follow: asparagine 63, asparagine 74, and asparagine 96. The segment at 108–128 (EAAGEEEEEQRKEEEPPRPAV) is disordered. Residue 141–147 (TRTGSSF) participates in 3'-phosphoadenylyl sulfate binding. The N-linked (GlcNAc...) asparagine glycan is linked to asparagine 256. A 3'-phosphoadenylyl sulfate-binding site is contributed by 301-309 (RDPRAVLAS). 2 N-linked (GlcNAc...) asparagine glycosylation sites follow: asparagine 420 and asparagine 464.

This sequence belongs to the sulfotransferase 1 family. Gal/GlcNAc/GalNAc subfamily. In terms of processing, N-glycosylated. In terms of tissue distribution, widely expressed in adult tissues. Expressed in heart, placenta, skeletal muscle and pancreas. Also expressed in various immune tissues such as spleen, lymph node, thymus and appendix.

It localises to the golgi apparatus membrane. The enzyme catalyses chondroitin beta-D-glucuronate + n 3'-phosphoadenylyl sulfate = chondroitin 6'-sulfate + n adenosine 3',5'-bisphosphate + n H(+). It carries out the reaction 3'-phosphoadenylyl sulfate + keratan = adenosine 3',5'-bisphosphate + keratan 6'-sulfate.. Its function is as follows. Sulfotransferase that utilizes 3'-phospho-5'-adenylyl sulfate (PAPS) as sulfonate donor to catalyze the transfer of sulfate to position 6 of the N-acetylgalactosamine (GalNAc) residue of chondroitin. Chondroitin sulfate constitutes the predominant proteoglycan present in cartilage and is distributed on the surfaces of many cells and extracellular matrices. Catalyzes with a lower efficiency the sulfation of Gal residues of keratan sulfate, another glycosaminoglycan. Can also catalyze the sulfation of the Gal residues in sialyl N-acetyllactosamine (sialyl LacNAc) oligosaccharides. May play a role in the maintenance of naive T-lymphocytes in the spleen. The chain is Carbohydrate sulfotransferase 3 (CHST3) from Homo sapiens (Human).